The chain runs to 159 residues: Histone H1 (159 aa).

3 disordered regions span residues 1–31 (MAEK…ITEL), 80–99 (KGAE…KKEK), and 132–159 (AAKK…KKKS). The segment covering 10 to 22 (VTTKKPAATHRRR) has biased composition (basic residues). The H15 domain occupies 12–102 (TKKPAATHRR…GEGKKEKEKA (91 aa)). The span at 84–93 (CAGGQGTGVG) shows a compositional bias: gly residues. A compositionally biased stretch (basic residues) spans 134-148 (KKVKAAPKKAKKPVK). The span at 149–159 (KTTEKKEKKKS) shows a compositional bias: basic and acidic residues.

This sequence belongs to the histone H1/H5 family.

The protein localises to the nucleus. Its subcellular location is the chromosome. Histones H1 are necessary for the condensation of nucleosome chains into higher-order structures. The chain is Histone H1 from Psammechinus miliaris (Green sea urchin).